We begin with the raw amino-acid sequence, 622 residues long: Telomerase-associated protein of 75 kDa (622 aa).

In terms of assembly, component of the telomerase holoenzyme complex, composed of the catalytic core (the catalytic subunit TERT, the telomerase RNA template component TER and TAP65/p65), which is associated with two heterotrimeric subcomplexes: (i) the replication protein A (RPA)-related subcomplex, composed of TEB1, RPA2/TEB2 and RPA3/TEB3 and (ii) the CST-like subcomplex, composed of TAP75/p75, TAP45/p45 and TAP19/p19. TEB1 and the CST-like subcomplex are tethered to the catalytic core by TAP50/p50.

It localises to the chromosome. It is found in the telomere. Component of a CST-like subcomplex of the holoenzyme telomerase ribonucleoprotein complex, which stimulates telomerase complementary-strand synthesis. Telomerase is an essential ribonucleoprotein enzyme that copies new telomeric repeats onto chromosome ends by repetitively synthesizing the short telomere-repeat sequence 5'-TTGGGG-3' using an RNA template component TER. The CST-like subcomplex (also named 7-4-1) binds telomeric single-stranded DNA and coordinates telomere G-strand and C-strand synthesis. The polypeptide is Telomerase-associated protein of 75 kDa (Tetrahymena thermophila (strain SB210)).